The chain runs to 213 residues: Thymidylate kinase (213 aa).

11-18 lines the ATP pocket; that stretch reads GPEGAGKT.

The protein belongs to the thymidylate kinase family.

The catalysed reaction is dTMP + ATP = dTDP + ADP. Phosphorylation of dTMP to form dTDP in both de novo and salvage pathways of dTTP synthesis. The chain is Thymidylate kinase from Leuconostoc mesenteroides subsp. mesenteroides (strain ATCC 8293 / DSM 20343 / BCRC 11652 / CCM 1803 / JCM 6124 / NCDO 523 / NBRC 100496 / NCIMB 8023 / NCTC 12954 / NRRL B-1118 / 37Y).